A 182-amino-acid polypeptide reads, in one-letter code: Transmembrane and coiled-coil domain-containing protein 2 (182 aa).

A helical transmembrane segment spans residues 51–71 (VQIILRISFLILLGIGIYALW). The stretch at 124-151 (GLQEKILKKLKTVENKMKNLEGIIVAQK) forms a coiled coil.

Its subcellular location is the membrane. The polypeptide is Transmembrane and coiled-coil domain-containing protein 2 (TMCO2) (Homo sapiens (Human)).